Reading from the N-terminus, the 1230-residue chain is Formin-like protein 14 (1230 aa).

The 194-residue stretch at 1 to 194 (MSLLSRFFYK…QYVARRNINS (194 aa)) folds into the Phosphatase tensin-type domain. C127 (phosphocysteine intermediate) is an active-site residue. The C2 tensin-type domain maps to 200-339 (ERALSLDCVI…FRAEVLFGEV (140 aa)). Disordered regions lie at residues 412–432 (FNSPDSEEETNTSSAADSSDE), 460–822 (HESS…LKPL), and 1187–1230 (ENEK…RHRT). Residues 484–496 (DNPLNLPSDPPSS) show a composition bias toward low complexity. Composition is skewed to pro residues over residues 503–514 (LPPPPPPPPPPL), 524–535 (SQPPPPPPPPPL), 545–556 (SQPPPPPPPPPL), and 566–575 (SQPPPPPPLP). Over residues 579–591 (NRDPLTTLHQPIN) the composition is skewed to polar residues. Pro residues-rich tracts occupy residues 592–630 (KTPPPPPPPPPPLPSRSIPPPLAQPPPPRPPPPPPPPPS), 637–649 (PSAPPPPPPPPPS), 660–672 (QPPPPPPPPPPTR), 679–688 (APPPPPPPPT), 699–711 (PSTPPPPPPPPPK), 718–728 (PKPPAPPPLPP), and 735–766 (APPPPPPPPLSKTPAPPPPPLSKTPVPPPPPG). One can recognise an FH2 domain in the interval 809-1207 (VPTAAPKKTA…KLEKEAIKEK (399 aa)). A compositionally biased stretch (basic and acidic residues) spans 1187–1215 (ENEKQAEAEKKKLEKEAIKEKSATKKDGV).

The protein belongs to the formin-like family. Class-II subfamily.

The sequence is that of Formin-like protein 14 (FH14) from Arabidopsis thaliana (Mouse-ear cress).